We begin with the raw amino-acid sequence, 102 residues long: Antitoxin VapB46 (102 aa).

It belongs to the phD/YefM antitoxin family.

Functionally, antitoxin component of a type II toxin-antitoxin (TA) system. Neutralizes the effect of cognate toxin VapC46. The sequence is that of Antitoxin VapB46 (vapB46) from Mycobacterium tuberculosis (strain CDC 1551 / Oshkosh).